The primary structure comprises 68 residues: UPF0352 protein CPS_2611 (68 aa).

This sequence belongs to the UPF0352 family.

The chain is UPF0352 protein CPS_2611 from Colwellia psychrerythraea (strain 34H / ATCC BAA-681) (Vibrio psychroerythus).